The primary structure comprises 244 residues: Carboxy-S-adenosyl-L-methionine synthase (244 aa).

Residues Y40, 65–67, 90–91, 119–120, N134, and R201 each bind S-adenosyl-L-methionine; these read GCS, DN, and DL.

This sequence belongs to the class I-like SAM-binding methyltransferase superfamily. Cx-SAM synthase family. Homodimer.

The enzyme catalyses prephenate + S-adenosyl-L-methionine = carboxy-S-adenosyl-L-methionine + 3-phenylpyruvate + H2O. Its function is as follows. Catalyzes the conversion of S-adenosyl-L-methionine (SAM) to carboxy-S-adenosyl-L-methionine (Cx-SAM). The sequence is that of Carboxy-S-adenosyl-L-methionine synthase from Geobacter metallireducens (strain ATCC 53774 / DSM 7210 / GS-15).